We begin with the raw amino-acid sequence, 66 residues long: Clarkitoxin-1 (66 aa).

Intrachain disulfides connect Cys3-Cys24, Cys17-Cys42, Cys46-Cys59, and Cys60-Cys65.

In terms of tissue distribution, expressed by the venom gland.

The protein resides in the secreted. Not toxic to mice when injected intravenously or intraperitoneally. This Micrurus clarki (Clark's coral snake) protein is Clarkitoxin-1.